The primary structure comprises 611 residues: Leucine aminopeptidase (611 aa).

Residues 129 to 131 and 278 to 282 each bind substrate; these read QCQ and GGMEN. His-305 contributes to the Zn(2+) binding site. Residue Glu-306 is the Proton acceptor of the active site. Zn(2+) contacts are provided by His-309 and Glu-328. Tyr-393 functions as the Proton donor in the catalytic mechanism. 562–564 is a binding site for substrate; that stretch reads RMK.

Belongs to the peptidase M1 family. Zn(2+) serves as cofactor.

The protein resides in the cytoplasm. The enzyme catalyses an epoxide + H2O = an ethanediol. In terms of biological role, aminopeptidase that preferentially cleaves di- and tripeptides. Also has low epoxide hydrolase activity (in vitro). Can hydrolyze the epoxide leukotriene LTA(4) but it forms preferentially 5,6-dihydroxy-7,9,11,14-eicosatetraenoic acid rather than the cytokine leukotriene B(4) as the product compared to the homologous mammalian enzyme (in vitro). The polypeptide is Leucine aminopeptidase (LKHA4) (Oryza sativa subsp. japonica (Rice)).